The sequence spans 88 residues: Thioredoxin-2 (88 aa).

Residues 2-88 (SRVIHISSNE…YRNGAKVSEF (87 aa)) form the Thioredoxin domain. Residues Cys31 and Cys34 each act as nucleophile in the active site. Residues Cys31 and Cys34 are joined by a disulfide bond.

It belongs to the thioredoxin family.

Its function is as follows. Participates in various redox reactions through the reversible oxidation of its active center dithiol to a disulfide and catalyzes dithiol-disulfide exchange reactions. The protein is Thioredoxin-2 (trxB) of Dictyostelium discoideum (Social amoeba).